The primary structure comprises 451 residues: Tubulin gamma-1 chain (451 aa).

A Phosphoserine; by BRSK1 modification is found at Ser-131. 142–148 (AGGTGSG) is a binding site for GTP.

Belongs to the tubulin family. Component of the gamma-tubulin ring complex (gTuRC) consisting of TUBGCP2, TUBGCP3, TUBGCP4, TUBGCP5 and TUBGCP6 and gamma-tubulin TUBG1 or TUBG2. TUBGCP2, TUBGCP3, TUBGCP4, TUBGCP5 and TUBGCP6 assemble in a 5:5:2:1:1 stoichiometry; each is associated with a gamma-tubulin, thereby arranging 14 gamma-tubulins in a helical manner. Gamma-tubulin at the first position is blocked by TUBGCP3 at the last position, allowing 13 protafilaments to grow into a microtubule. The gTuRC (via TUBGCP3 and TUBGCP6) interacts with ACTB and MZT1; the interactions form a luminal bridge that stabilizes the initial structure during complex assembly. The gTuRC (via TUBGCP2) interacts with MZT2A/MZT2B and CDK5RAP2 (via CM1 motif); the interactions play a role in gTuRC activation. Interacts with alpha-beta tubulin heterodimers; the interaction allows microtubules to nucleate from the gTuRC. Interacts with B9D2. Interacts with CDK5RAP2; the interaction is leading to centrosomal localization of TUBG1 and CDK5RAP2. Interacts with CIMAP3. Interacts with SAS6 and NUP62 at the centrosome. Interacts with EML3 (phosphorylated at 'Thr-881') and HAUS8. Interacts with DNM2; this interaction may participate in centrosome cohesion. Interacts with CCDC66. Phosphorylation at Ser-131 by BRSK1 regulates centrosome duplication, possibly by mediating relocation of gamma-tubulin and its associated proteins from the cytoplasm to the centrosome.

The protein resides in the cytoplasm. Its subcellular location is the cytoskeleton. It is found in the microtubule organizing center. It localises to the centrosome. The protein localises to the spindle. Its function is as follows. Tubulin is the major constituent of microtubules, protein filaments consisting of alpha- and beta-tubulin heterodimers. Gamma-tubulin is a key component of the gamma-tubulin ring complex (gTuRC) which mediates microtubule nucleation. The gTuRC regulates the minus-end nucleation of alpha-beta tubulin heterodimers that grow into microtubule protafilaments, a critical step in centrosome duplication and spindle formation. The sequence is that of Tubulin gamma-1 chain from Bos taurus (Bovine).